Here is a 518-residue protein sequence, read N- to C-terminus: Probable bifunctional methylthioribulose-1-phosphate dehydratase/enolase-phosphatase E1 (518 aa).

The methylthioribulose-1-phosphate dehydratase stretch occupies residues 1 to 242 (MACCGGGRGE…AIKLYQLGID (242 aa)). Residue Cys-114 participates in substrate binding. His-132 and His-134 together coordinate Zn(2+). Glu-157 acts as the Proton donor/acceptor; for methylthioribulose-1-phosphate dehydratase activity in catalysis. His-207 contributes to the Zn(2+) binding site. An enolase-phosphatase E1 region spans residues 279 to 518 (VVLDIEGTTT…FRTIKSFSEI (240 aa)). Positions 282 and 284 each coordinate Mg(2+). Substrate contacts are provided by residues 417–418 (SS) and Lys-451. Asp-477 provides a ligand contact to Mg(2+).

It in the N-terminal section; belongs to the aldolase class II family. MtnB subfamily. This sequence in the C-terminal section; belongs to the HAD-like hydrolase superfamily. MasA/MtnC family. Zn(2+) is required as a cofactor. The cofactor is Mg(2+).

It carries out the reaction 5-(methylsulfanyl)-D-ribulose 1-phosphate = 5-methylsulfanyl-2,3-dioxopentyl phosphate + H2O. The enzyme catalyses 5-methylsulfanyl-2,3-dioxopentyl phosphate + H2O = 1,2-dihydroxy-5-(methylsulfanyl)pent-1-en-3-one + phosphate. It participates in amino-acid biosynthesis; L-methionine biosynthesis via salvage pathway; L-methionine from S-methyl-5-thio-alpha-D-ribose 1-phosphate: step 2/6. It functions in the pathway amino-acid biosynthesis; L-methionine biosynthesis via salvage pathway; L-methionine from S-methyl-5-thio-alpha-D-ribose 1-phosphate: step 3/6. The protein operates within amino-acid biosynthesis; L-methionine biosynthesis via salvage pathway; L-methionine from S-methyl-5-thio-alpha-D-ribose 1-phosphate: step 4/6. In Oryza sativa subsp. indica (Rice), this protein is Probable bifunctional methylthioribulose-1-phosphate dehydratase/enolase-phosphatase E1.